The sequence spans 269 residues: MGSLTTNIVLAVAVVAALVGGGSCGPPKVPPGPNITTNYNAPWLPARATWYGQPYGSGSTDNGGACGIKNVNLPPYNGMISCGNVPIFKDGRGCGSCYEVKCEQPAACSKQPVTVFITDMNYEPISAYHFDFSGKAFGAMACPGKETELRKAGIIDMQFRRVRCKYPGGQKVTFHVEKGSNPNYLAVLVKFVADDGDVIQMDLQEAGLPAWRPMKLSWGAIWRMDTATPLKAPFSIRVTTESGKSLIAKDVIPVNWMPDAIYVSNVQFY.

Residues 1-24 (MGSLTTNIVLAVAVVAALVGGGSC) form the signal peptide. Residue N34 is glycosylated (N-linked (GlcNAc...) asparagine). The 107-residue stretch at 63–169 (GGACGIKNVN…RRVRCKYPGG (107 aa)) folds into the Expansin-like EG45 domain. Intrachain disulfides connect C66–C94, C97–C164, and C102–C108. The Expansin-like CBD domain maps to 183 to 264 (NYLAVLVKFV…NWMPDAIYVS (82 aa)).

This sequence belongs to the expansin family. Expansin B subfamily.

The protein localises to the secreted. It localises to the cell wall. Its subcellular location is the membrane. Functionally, may cause loosening and extension of plant cell walls by disrupting non-covalent bonding between cellulose microfibrils and matrix glucans. No enzymatic activity has been found. May be required for rapid internodal elongation in deepwater rice during submergence. The polypeptide is Expansin-B9 (EXPB9) (Oryza sativa subsp. japonica (Rice)).